We begin with the raw amino-acid sequence, 485 residues long: Glutamyl-tRNA(Gln) amidotransferase subunit A (485 aa).

Residues Lys78 and Ser153 each act as charge relay system in the active site. The active-site Acyl-ester intermediate is Ser177.

It belongs to the amidase family. GatA subfamily. Heterotrimer of A, B and C subunits.

It catalyses the reaction L-glutamyl-tRNA(Gln) + L-glutamine + ATP + H2O = L-glutaminyl-tRNA(Gln) + L-glutamate + ADP + phosphate + H(+). Its function is as follows. Allows the formation of correctly charged Gln-tRNA(Gln) through the transamidation of misacylated Glu-tRNA(Gln) in organisms which lack glutaminyl-tRNA synthetase. The reaction takes place in the presence of glutamine and ATP through an activated gamma-phospho-Glu-tRNA(Gln). This Lawsonia intracellularis (strain PHE/MN1-00) protein is Glutamyl-tRNA(Gln) amidotransferase subunit A.